A 312-amino-acid polypeptide reads, in one-letter code: Beta-ketoacyl-[acyl-carrier-protein] synthase III (312 aa).

Catalysis depends on residues Cys-112 and His-237. The segment at 238–242 (QANIR) is ACP-binding. Asn-267 is a catalytic residue.

This sequence belongs to the thiolase-like superfamily. FabH family. Homodimer.

It is found in the cytoplasm. It carries out the reaction (2S)-2-methylbutanoyl-CoA + malonyl-[ACP] + H(+) = (4S)-4-methyl-3-oxohexanoyl-[ACP] + CO2 + CoA. The catalysed reaction is 2-methylpropanoyl-CoA + malonyl-[ACP] + H(+) = 4-methyl-3-oxopentanoyl-[ACP] + CO2 + CoA. The enzyme catalyses 3-methylbutanoyl-CoA + malonyl-[ACP] + H(+) = 5-methyl-3-oxohexanoyl-[ACP] + CO2 + CoA. It catalyses the reaction malonyl-[ACP] + acetyl-CoA + H(+) = 3-oxobutanoyl-[ACP] + CO2 + CoA. It participates in lipid metabolism; fatty acid biosynthesis. Functionally, catalyzes the condensation reaction of fatty acid synthesis by the addition to an acyl acceptor of two carbons from malonyl-ACP. Catalyzes the first condensation reaction which initiates fatty acid synthesis and may therefore play a role in governing the total rate of fatty acid production. Possesses both acetoacetyl-ACP synthase and acetyl transacylase activities. Can use branched-chain acyl-CoAs, with a preference for 2-methylbutanoyl-CoA, the precursor of odd-numbered anteiso fatty acids, at 30 degrees Celsius, which is further increased at a low temperature. Shows weak activity with acetyl-CoA. The protein is Beta-ketoacyl-[acyl-carrier-protein] synthase III of Listeria monocytogenes serotype 1/2a (strain 10403S).